The chain runs to 60 residues: Cecropin-B type 2 (60 aa).

The N-terminal stretch at 1–24 is a signal peptide; the sequence is MNFSKLFALVLLIGLVLLTGQTEA. An Isoleucine amide modification is found at Ile-58.

It belongs to the cecropin family.

Its subcellular location is the secreted. Functionally, cecropins have lytic and antibacterial activity against several Gram-positive and Gram-negative bacteria. This Aedes albopictus (Asian tiger mosquito) protein is Cecropin-B type 2 (CECB2).